A 104-amino-acid chain; its full sequence is Ubiquitin-related modifier 1 homolog (104 aa).

1-thioglycine is present on Gly-104. Residue Gly-104 forms a Glycyl lysine isopeptide (Gly-Lys) (interchain with K-? in acceptor proteins) linkage.

Belongs to the URM1 family. In terms of assembly, interacts with cer. C-terminal thiocarboxylation occurs in 2 steps, it is first acyl-adenylated (-COAMP) via the hesA/moeB/thiF part of the MOCS3 homolog, then thiocarboxylated (-COSH) via the rhodanese domain of the MOCS3 homolog.

It localises to the cytoplasm. It participates in tRNA modification; 5-methoxycarbonylmethyl-2-thiouridine-tRNA biosynthesis. Functionally, acts as a sulfur carrier required for 2-thiolation of mcm(5)S(2)U at tRNA wobble positions of cytosolic tRNA(Lys), tRNA(Glu) and tRNA(Gln). Serves as sulfur donor in tRNA 2-thiolation reaction by being thiocarboxylated (-COSH) at its C-terminus by MOCS3. The sulfur is then transferred to tRNA to form 2-thiolation of mcm(5)S(2)U. Also acts as a ubiquitin-like protein (UBL) that is covalently conjugated via an isopeptide bond to lysine residues of target proteins such as Prx2/Jafrac1, Ciao1, Eip71CD and GILT1. The thiocarboxylated form serves as substrate for conjugation and oxidative stress specifically induces the formation of UBL-protein conjugates. This is Ubiquitin-related modifier 1 homolog from Drosophila grimshawi (Hawaiian fruit fly).